The sequence spans 466 residues: Coproporphyrinogen III oxidase (466 aa).

FAD-binding positions include 9–14 (GAGITG), 34–35 (EA), Lys-42, 56–59 (GPES), Val-254, and 446–448 (VGL).

The protein belongs to the protoporphyrinogen/coproporphyrinogen oxidase family. Coproporphyrinogen III oxidase subfamily. Requires FAD as cofactor.

The protein resides in the cytoplasm. The catalysed reaction is coproporphyrinogen III + 3 O2 = coproporphyrin III + 3 H2O2. It functions in the pathway porphyrin-containing compound metabolism; protoheme biosynthesis. Its activity is regulated as follows. The generation of protoporphyrin IX, but not coproporphyrin III, is stimulated by heme-bound HemQ. This stimulatory effect is mediated by superoxide. Inhibited by acifluorfen analogs. Involved in coproporphyrin-dependent heme b biosynthesis. Catalyzes the oxidation of coproporphyrinogen III to coproporphyrin III. Can also oxidize protoporphyrinogen IX. This is Coproporphyrinogen III oxidase from Staphylococcus aureus (strain NCTC 8325 / PS 47).